The chain runs to 392 residues: Iron-sulfur cluster assembly SufBD family protein ML0594 (392 aa).

It belongs to the iron-sulfur cluster assembly SufBD family.

This Mycobacterium leprae (strain TN) protein is Iron-sulfur cluster assembly SufBD family protein ML0594.